The following is a 312-amino-acid chain: Homoserine O-succinyltransferase (312 aa).

Residue C142 is the Acyl-thioester intermediate of the active site. 2 residues coordinate substrate: K163 and S192. The active-site Proton acceptor is H235. Residue E237 is part of the active site. R249 contacts substrate.

The protein belongs to the MetA family.

Its subcellular location is the cytoplasm. It catalyses the reaction L-homoserine + succinyl-CoA = O-succinyl-L-homoserine + CoA. It functions in the pathway amino-acid biosynthesis; L-methionine biosynthesis via de novo pathway; O-succinyl-L-homoserine from L-homoserine: step 1/1. Its function is as follows. Transfers a succinyl group from succinyl-CoA to L-homoserine, forming succinyl-L-homoserine. The chain is Homoserine O-succinyltransferase from Aliivibrio salmonicida (strain LFI1238) (Vibrio salmonicida (strain LFI1238)).